The chain runs to 250 residues: Ubiquinone/menaquinone biosynthesis C-methyltransferase UbiE (250 aa).

Residues S73, D94, and 122–123 (NA) each bind S-adenosyl-L-methionine.

It belongs to the class I-like SAM-binding methyltransferase superfamily. MenG/UbiE family.

It carries out the reaction a 2-demethylmenaquinol + S-adenosyl-L-methionine = a menaquinol + S-adenosyl-L-homocysteine + H(+). The enzyme catalyses a 2-methoxy-6-(all-trans-polyprenyl)benzene-1,4-diol + S-adenosyl-L-methionine = a 5-methoxy-2-methyl-3-(all-trans-polyprenyl)benzene-1,4-diol + S-adenosyl-L-homocysteine + H(+). Its pathway is quinol/quinone metabolism; menaquinone biosynthesis; menaquinol from 1,4-dihydroxy-2-naphthoate: step 2/2. It participates in cofactor biosynthesis; ubiquinone biosynthesis. Its function is as follows. Methyltransferase required for the conversion of demethylmenaquinol (DMKH2) to menaquinol (MKH2) and the conversion of 2-polyprenyl-6-methoxy-1,4-benzoquinol (DDMQH2) to 2-polyprenyl-3-methyl-6-methoxy-1,4-benzoquinol (DMQH2). The protein is Ubiquinone/menaquinone biosynthesis C-methyltransferase UbiE of Legionella pneumophila subsp. pneumophila (strain Philadelphia 1 / ATCC 33152 / DSM 7513).